The chain runs to 398 residues: Alpha-2,8-sialyltransferase 8F (398 aa).

At 1–3 (MRP) the chain is on the cytoplasmic side. Residues 4 to 24 (GGALLALLASLLLLLLLRLLW) form a helical; Signal-anchor for type II membrane protein membrane-spanning segment. Residues 25-398 (CPADAPGRAR…KLQFSKCEVA (374 aa)) lie on the Lumenal side of the membrane. Residues asparagine 66, asparagine 93, asparagine 151, and asparagine 196 are each glycosylated (N-linked (GlcNAc...) asparagine). 2 disulfide bridges follow: cysteine 186–cysteine 335 and cysteine 200–cysteine 395. Residues asparagine 214, 236–238 (NPS), and 322–324 (STG) contribute to the substrate site. Catalysis depends on histidine 370, which acts as the Proton donor/acceptor.

Belongs to the glycosyltransferase 29 family.

The protein resides in the golgi apparatus membrane. The enzyme catalyses a ganglioside GM3 + CMP-N-acetyl-beta-neuraminate = a ganglioside GD3 + CMP + H(+). It carries out the reaction a ganglioside GM3 (d18:1(4E)) + CMP-N-acetyl-beta-neuraminate = a ganglioside GD3 (d18:1(4E)) + CMP + H(+). The catalysed reaction is a ganglioside GD1a (d18:1(4E)) + CMP-N-acetyl-beta-neuraminate = a ganglioside GT1a (d18:1(4E)) + CMP + H(+). It catalyses the reaction a ganglioside GD1a + CMP-N-acetyl-beta-neuraminate = a ganglioside GT1a + CMP + H(+). The enzyme catalyses a ganglioside GM1b (d18:1(4E)) + CMP-N-acetyl-beta-neuraminate = a ganglioside GD1c (d18:1(4E)) + CMP + H(+). It carries out the reaction a ganglioside GM1b + CMP-N-acetyl-beta-neuraminate = a ganglioside GD1c + CMP + H(+). The catalysed reaction is a ganglioside GM4 (d18:1(4E)) + CMP-N-acetyl-beta-neuraminate = an N-acetyl-alpha-neuraminosyl-(2-&gt;8)-N-acetyl-alpha-neuraminosyl-(2-&gt;3)-beta-D-galactosyl-(1&lt;-&gt;1')-N-acylsphing-4-enine + CMP + H(+). It catalyses the reaction N-acetyl-alpha-neuraminosyl-(2-&gt;3)-beta-D-galactosyl-(1&lt;-&gt;1')-ceramide + CMP-N-acetyl-beta-neuraminate = N-acetyl-alpha-neuraminosyl-(2-&gt;8)-N-acetyl-alpha-neuraminosyl-(2-&gt;3)-beta-D-galactosyl-(1&lt;-&gt;1')-ceramide + CMP + H(+). The enzyme catalyses a ganglioside GT1b (d18:1(4E)) + CMP-N-acetyl-beta-neuraminate = a ganglioside GQ1b (d18:1(4E)) + CMP + H(+). It carries out the reaction a ganglioside GT1b + CMP-N-acetyl-beta-neuraminate = a ganglioside GQ1b + CMP + H(+). The protein operates within protein modification; protein glycosylation. In terms of biological role, alpha-2,8-sialyltransferase that prefers O-glycans to N-glycans or glycolipids as acceptor substrates. The minimal acceptor substrate is the NeuAc-alpha-2,3(6)-Gal sequence at the non-reducing end of their carbohydrate groups. In Homo sapiens (Human), this protein is Alpha-2,8-sialyltransferase 8F.